The primary structure comprises 455 residues: Deoxyribodipyrimidine photo-lyase (455 aa).

Residues 2 to 131 form the Photolyase/cryptochrome alpha/beta domain; sequence SVAVVLFTSD…ELHVHDAVVT (130 aa). Residues Tyr-219 and 231–235 contribute to the FAD site; that span reads TSRLS. 2 interaction with DNA regions span residues 266 to 273 and 330 to 331; these read QLAWRDFH and NR. An FAD-binding site is contributed by 361–363; it reads DGD. Position 392 (Gln-392) interacts with DNA.

This sequence belongs to the DNA photolyase class-1 family. In terms of assembly, monomer. FAD is required as a cofactor. Coenzyme F420-(gamma-Glu)n serves as cofactor.

The catalysed reaction is cyclobutadipyrimidine (in DNA) = 2 pyrimidine residues (in DNA).. Its function is as follows. Involved in repair of UV radiation-induced DNA damage. Catalyzes the light-dependent monomerization (300-600 nm) of cyclobutyl pyrimidine dimers (in cis-syn configuration), which are formed between adjacent bases on the same DNA strand upon exposure to ultraviolet radiation. In Streptomyces griseus, this protein is Deoxyribodipyrimidine photo-lyase (phr).